Reading from the N-terminus, the 517-residue chain is 2,3-bisphosphoglycerate-independent phosphoglycerate mutase 1 (517 aa).

Mn(2+)-binding residues include D17 and S67. S67 functions as the Phosphoserine intermediate in the catalytic mechanism. Residues H128, 158-159 (RD), R190, R196, 267-270 (RPDR), and K340 contribute to the substrate site. Residues D407, H411, D448, H449, and H467 each contribute to the Mn(2+) site.

This sequence belongs to the BPG-independent phosphoglycerate mutase family. Mn(2+) serves as cofactor.

The catalysed reaction is (2R)-2-phosphoglycerate = (2R)-3-phosphoglycerate. The protein operates within carbohydrate degradation; glycolysis; pyruvate from D-glyceraldehyde 3-phosphate: step 3/5. In terms of biological role, catalyzes the interconversion of 2-phosphoglycerate and 3-phosphoglycerate. The chain is 2,3-bisphosphoglycerate-independent phosphoglycerate mutase 1 from Methanosarcina barkeri (strain Fusaro / DSM 804).